A 98-amino-acid polypeptide reads, in one-letter code: Derivative of benzaldehyde biosynthesis cluster protein C (98 aa).

The protein belongs to the YciI family.

It participates in secondary metabolite biosynthesis. Its function is as follows. Part of the gene cluster that mediates the biosynthesis of the antibiotic 2,4-dihydroxy-3-methyl-6-(2-oxopropyl)benzaldehyde (DHMBA) and its derivatives. The direct non-reducing polyketide synthase dbaI product is 2,4-dihydroxy-3-methyl-6-(2-oxopropyl)benzaldehyde (DHMBA), produced by condensation of one acetyl-CoA starter unit with 4 malonyl-CoA units and one methylation step. The FAD-dependent monooxygenase dbaH is responsible for the synthesis of yellow pigments derived from the oxidation of DHMBA. The roles of dbaB, C, E and F have still to be determined. In Emericella nidulans (strain FGSC A4 / ATCC 38163 / CBS 112.46 / NRRL 194 / M139) (Aspergillus nidulans), this protein is Derivative of benzaldehyde biosynthesis cluster protein C.